A 459-amino-acid polypeptide reads, in one-letter code: tRNA modification GTPase MnmE (459 aa).

Residues Arg-23, Glu-88, and Arg-127 each contribute to the (6S)-5-formyl-5,6,7,8-tetrahydrofolate site. The 159-residue stretch at 223-381 folds into the TrmE-type G domain; that stretch reads GLNTVIIGKP…LKDTIENMFA (159 aa). Asn-233 contributes to the K(+) binding site. Residues 233–238, 252–258, and 277–280 each bind GTP; these read NVGKSS, TDIPGTT, and DTAG. Ser-237 contacts Mg(2+). K(+) contacts are provided by Thr-252, Ile-254, and Thr-257. Thr-258 lines the Mg(2+) pocket. Residue Lys-459 participates in (6S)-5-formyl-5,6,7,8-tetrahydrofolate binding.

This sequence belongs to the TRAFAC class TrmE-Era-EngA-EngB-Septin-like GTPase superfamily. TrmE GTPase family. As to quaternary structure, homodimer. Heterotetramer of two MnmE and two MnmG subunits. The cofactor is K(+).

It is found in the cytoplasm. Exhibits a very high intrinsic GTPase hydrolysis rate. Involved in the addition of a carboxymethylaminomethyl (cmnm) group at the wobble position (U34) of certain tRNAs, forming tRNA-cmnm(5)s(2)U34. The sequence is that of tRNA modification GTPase MnmE from Clostridium acetobutylicum (strain ATCC 824 / DSM 792 / JCM 1419 / IAM 19013 / LMG 5710 / NBRC 13948 / NRRL B-527 / VKM B-1787 / 2291 / W).